A 398-amino-acid polypeptide reads, in one-letter code: 4-hydroxy-3-methylbut-2-enyl diphosphate reductase (398 aa).

Cys66 is a [4Fe-4S] cluster binding site. His96 provides a ligand contact to (2E)-4-hydroxy-3-methylbut-2-enyl diphosphate. Residue His96 coordinates dimethylallyl diphosphate. Residue His96 coordinates isopentenyl diphosphate. Residue Cys157 participates in [4Fe-4S] cluster binding. His185 contributes to the (2E)-4-hydroxy-3-methylbut-2-enyl diphosphate binding site. His185 provides a ligand contact to dimethylallyl diphosphate. His185 provides a ligand contact to isopentenyl diphosphate. Glu187 serves as the catalytic Proton donor. Position 250 (Thr250) interacts with (2E)-4-hydroxy-3-methylbut-2-enyl diphosphate. [4Fe-4S] cluster is bound at residue Cys288. 4 residues coordinate (2E)-4-hydroxy-3-methylbut-2-enyl diphosphate: Ser317, Ser318, Asn319, and Ser380. Ser317, Ser318, Asn319, and Ser380 together coordinate dimethylallyl diphosphate. Ser317, Ser318, Asn319, and Ser380 together coordinate isopentenyl diphosphate.

Belongs to the IspH family. It depends on [4Fe-4S] cluster as a cofactor.

The enzyme catalyses isopentenyl diphosphate + 2 oxidized [2Fe-2S]-[ferredoxin] + H2O = (2E)-4-hydroxy-3-methylbut-2-enyl diphosphate + 2 reduced [2Fe-2S]-[ferredoxin] + 2 H(+). It carries out the reaction dimethylallyl diphosphate + 2 oxidized [2Fe-2S]-[ferredoxin] + H2O = (2E)-4-hydroxy-3-methylbut-2-enyl diphosphate + 2 reduced [2Fe-2S]-[ferredoxin] + 2 H(+). It functions in the pathway isoprenoid biosynthesis; dimethylallyl diphosphate biosynthesis; dimethylallyl diphosphate from (2E)-4-hydroxy-3-methylbutenyl diphosphate: step 1/1. It participates in isoprenoid biosynthesis; isopentenyl diphosphate biosynthesis via DXP pathway; isopentenyl diphosphate from 1-deoxy-D-xylulose 5-phosphate: step 6/6. Functionally, catalyzes the conversion of 1-hydroxy-2-methyl-2-(E)-butenyl 4-diphosphate (HMBPP) into a mixture of isopentenyl diphosphate (IPP) and dimethylallyl diphosphate (DMAPP). Acts in the terminal step of the DOXP/MEP pathway for isoprenoid precursor biosynthesis. The chain is 4-hydroxy-3-methylbut-2-enyl diphosphate reductase from Prochlorococcus marinus (strain MIT 9515).